A 385-amino-acid chain; its full sequence is Enoyl-[acyl-carrier-protein] reductase, mitochondrial (385 aa).

Catalysis depends on tyrosine 78, which acts as the Proton donor. NADP(+)-binding positions include asparagine 162, 190 to 193 (TSGV), 213 to 215 (RDR), 288 to 291 (YGGM), 313 to 315 (YWV), and lysine 378.

It belongs to the zinc-containing alcohol dehydrogenase family. Quinone oxidoreductase subfamily. Homodimer.

The protein localises to the mitochondrion matrix. It catalyses the reaction a 2,3-saturated acyl-[ACP] + NADP(+) = a (2E)-enoyl-[ACP] + NADPH + H(+). In terms of biological role, catalyzes the NADPH-dependent reduction of trans-2-enoyl thioesters in mitochondrial fatty acid synthesis (fatty acid synthesis type II). Fatty acid chain elongation in mitochondria uses acyl carrier protein (ACP) as an acyl group carrier, but the enzyme accepts both ACP and CoA thioesters as substrates in vitro. Required for respiration and the maintenance of the mitochondrial compartment. The sequence is that of Enoyl-[acyl-carrier-protein] reductase, mitochondrial (ETR1) from Candida glabrata (strain ATCC 2001 / BCRC 20586 / JCM 3761 / NBRC 0622 / NRRL Y-65 / CBS 138) (Yeast).